The chain runs to 354 residues: Probable disease resistance protein At5g45490 (354 aa).

The stretch at 33–53 (AKGNLEKKRDDNEEEERLKTE) forms a coiled coil. Residues 45-122 (EEEERLKTES…VYAPRVWVSM (78 aa)) enclose the NB-ARC domain. 91-98 (GEYGVGKT) is a binding site for ATP. The tract at residues 328 to 354 (DDEVGPVGSTHGQTDSSNRQPANQASS) is disordered. The span at 337-354 (THGQTDSSNRQPANQASS) shows a compositional bias: polar residues.

Functionally, possible disease resistance protein. This is Probable disease resistance protein At5g45490 from Arabidopsis thaliana (Mouse-ear cress).